The following is a 427-amino-acid chain: MLVKADMTKDIAQVMAEVGRKAKAAAAPLSIATSEQKNKALNAAADAILEARADILEANRLDLANAEKNGMAASFVDRLTLNEARIDAIAEGIRTIATLPDPVGEVIAEWDRPNGLHIERVRTPLGVIGVIYESRPNVTADAGALCLKAGNAVILRGGSDSAHSSAAIHKALVKGLEAANLPADAIQIVPVTDRAAVGEMLKGLGGAIDVIVPRGGKSLVARVQSEARVPVFAHLEGICHLYIDKSADLDMARRIALDAKMRRTGICGAAETLLVDRAVASTHLAPILGDLAAGGCEIRGSAEVLALYPAAKPATEEDWSTEYLDAIISVALVDGISGAIDHINRYSSHHTEAIVAEDAQTVARFFNEIDSAILLHNASTQFADGGEFGMGAEIGIATGKMHARGPVGVEQLTSFKYRVRGSGQVRG.

The protein belongs to the gamma-glutamyl phosphate reductase family.

It localises to the cytoplasm. The enzyme catalyses L-glutamate 5-semialdehyde + phosphate + NADP(+) = L-glutamyl 5-phosphate + NADPH + H(+). Its pathway is amino-acid biosynthesis; L-proline biosynthesis; L-glutamate 5-semialdehyde from L-glutamate: step 2/2. Catalyzes the NADPH-dependent reduction of L-glutamate 5-phosphate into L-glutamate 5-semialdehyde and phosphate. The product spontaneously undergoes cyclization to form 1-pyrroline-5-carboxylate. The polypeptide is Gamma-glutamyl phosphate reductase (Brucella ovis (strain ATCC 25840 / 63/290 / NCTC 10512)).